The following is a 143-amino-acid chain: Sporulation-specific protein 73 (143 aa).

This sequence belongs to the SPO73 family. As to quaternary structure, interacts with SPO71.

It localises to the cytoplasm. It is found in the prospore membrane. Required for spore wall assembly and ascus formation. Involved in the formation and elongation of prospore membranes. This chain is Sporulation-specific protein 73, found in Saccharomyces cerevisiae (strain ATCC 204508 / S288c) (Baker's yeast).